Here is a 226-residue protein sequence, read N- to C-terminus: Urease accessory protein UreF (226 aa).

The protein belongs to the UreF family. UreD, UreF and UreG form a complex that acts as a GTP-hydrolysis-dependent molecular chaperone, activating the urease apoprotein by helping to assemble the nickel containing metallocenter of UreC. The UreE protein probably delivers the nickel.

Its subcellular location is the cytoplasm. Functionally, required for maturation of urease via the functional incorporation of the urease nickel metallocenter. The chain is Urease accessory protein UreF from Burkholderia ambifaria (strain ATCC BAA-244 / DSM 16087 / CCUG 44356 / LMG 19182 / AMMD) (Burkholderia cepacia (strain AMMD)).